The following is a 458-amino-acid chain: Bifunctional protein GlmU (458 aa).

The pyrophosphorylase stretch occupies residues 1 to 229 (MTNYAIILAA…FNESLGVNDR (229 aa)). UDP-N-acetyl-alpha-D-glucosamine contacts are provided by residues 8-11 (LAAG), lysine 22, glutamine 72, and 77-78 (GT). Residue aspartate 102 participates in Mg(2+) binding. UDP-N-acetyl-alpha-D-glucosamine-binding residues include glycine 139, glutamate 154, asparagine 169, and asparagine 227. Position 227 (asparagine 227) interacts with Mg(2+). The segment at 230 to 250 (VALATAESVMRRRINKAHMIN) is linker. Residues 251–458 (GVTFQNPDAT…AKRLPHYPQK (208 aa)) are N-acetyltransferase. Residues arginine 332 and lysine 350 each coordinate UDP-N-acetyl-alpha-D-glucosamine. Residue histidine 362 is the Proton acceptor of the active site. 2 residues coordinate UDP-N-acetyl-alpha-D-glucosamine: tyrosine 365 and asparagine 376. Acetyl-CoA is bound by residues alanine 379, 385–386 (NY), serine 404, alanine 422, and arginine 439.

It in the N-terminal section; belongs to the N-acetylglucosamine-1-phosphate uridyltransferase family. The protein in the C-terminal section; belongs to the transferase hexapeptide repeat family. Homotrimer. It depends on Mg(2+) as a cofactor.

Its subcellular location is the cytoplasm. It catalyses the reaction alpha-D-glucosamine 1-phosphate + acetyl-CoA = N-acetyl-alpha-D-glucosamine 1-phosphate + CoA + H(+). It carries out the reaction N-acetyl-alpha-D-glucosamine 1-phosphate + UTP + H(+) = UDP-N-acetyl-alpha-D-glucosamine + diphosphate. The protein operates within nucleotide-sugar biosynthesis; UDP-N-acetyl-alpha-D-glucosamine biosynthesis; N-acetyl-alpha-D-glucosamine 1-phosphate from alpha-D-glucosamine 6-phosphate (route II): step 2/2. It participates in nucleotide-sugar biosynthesis; UDP-N-acetyl-alpha-D-glucosamine biosynthesis; UDP-N-acetyl-alpha-D-glucosamine from N-acetyl-alpha-D-glucosamine 1-phosphate: step 1/1. It functions in the pathway bacterial outer membrane biogenesis; LPS lipid A biosynthesis. Catalyzes the last two sequential reactions in the de novo biosynthetic pathway for UDP-N-acetylglucosamine (UDP-GlcNAc). The C-terminal domain catalyzes the transfer of acetyl group from acetyl coenzyme A to glucosamine-1-phosphate (GlcN-1-P) to produce N-acetylglucosamine-1-phosphate (GlcNAc-1-P), which is converted into UDP-GlcNAc by the transfer of uridine 5-monophosphate (from uridine 5-triphosphate), a reaction catalyzed by the N-terminal domain. In Streptococcus uberis (strain ATCC BAA-854 / 0140J), this protein is Bifunctional protein GlmU.